A 499-amino-acid polypeptide reads, in one-letter code: Bifunctional purine biosynthesis protein PurH (499 aa).

One can recognise an MGS-like domain in the interval Met1–Thr144.

This sequence belongs to the PurH family.

The catalysed reaction is (6R)-10-formyltetrahydrofolate + 5-amino-1-(5-phospho-beta-D-ribosyl)imidazole-4-carboxamide = 5-formamido-1-(5-phospho-D-ribosyl)imidazole-4-carboxamide + (6S)-5,6,7,8-tetrahydrofolate. It carries out the reaction IMP + H2O = 5-formamido-1-(5-phospho-D-ribosyl)imidazole-4-carboxamide. Its pathway is purine metabolism; IMP biosynthesis via de novo pathway; 5-formamido-1-(5-phospho-D-ribosyl)imidazole-4-carboxamide from 5-amino-1-(5-phospho-D-ribosyl)imidazole-4-carboxamide (10-formyl THF route): step 1/1. It functions in the pathway purine metabolism; IMP biosynthesis via de novo pathway; IMP from 5-formamido-1-(5-phospho-D-ribosyl)imidazole-4-carboxamide: step 1/1. The polypeptide is Bifunctional purine biosynthesis protein PurH (Clostridium botulinum (strain Langeland / NCTC 10281 / Type F)).